Reading from the N-terminus, the 48-residue chain is Small, acid-soluble spore protein G (48 aa).

The segment covering 1–16 has biased composition (basic and acidic residues); it reads MSENRHENEENRRDAA. Residues 1–48 form a disordered region; that stretch reads MSENRHENEENRRDAAVAKVQNSGNAKVVVSVNTDQDQAQAQSQDGED. Over residues 35–48 the composition is skewed to low complexity; that stretch reads DQDQAQAQSQDGED.

The polypeptide is Small, acid-soluble spore protein G (sspG) (Bacillus subtilis (strain 168)).